The following is a 308-amino-acid chain: Glutaminase (308 aa).

Ser-66, Asn-117, Glu-161, Asn-168, Tyr-192, Tyr-244, and Val-262 together coordinate substrate.

This sequence belongs to the glutaminase family. Homotetramer.

The catalysed reaction is L-glutamine + H2O = L-glutamate + NH4(+). This chain is Glutaminase, found in Klebsiella pneumoniae (strain 342).